A 24-amino-acid polypeptide reads, in one-letter code: MTWTTPAYTELRLGFEITMYIANR.

A cross-link (pyrroloquinoline quinone (Glu-Tyr)) is located at residues 16 to 20 (EITMY).

Belongs to the PqqA family.

It functions in the pathway cofactor biosynthesis; pyrroloquinoline quinone biosynthesis. Its function is as follows. Required for coenzyme pyrroloquinoline quinone (PQQ) biosynthesis. PQQ is probably formed by cross-linking a specific glutamate to a specific tyrosine residue and excising these residues from the peptide. In Cupriavidus taiwanensis (strain DSM 17343 / BCRC 17206 / CCUG 44338 / CIP 107171 / LMG 19424 / R1) (Ralstonia taiwanensis (strain LMG 19424)), this protein is Coenzyme PQQ synthesis protein A.